The chain runs to 151 residues: Actin-depolymerizing factor 10 (151 aa).

Positions 15–149 (PAWIEVPEKS…DLEVLRGRAN (135 aa)) constitute an ADF-H domain.

Belongs to the actin-binding proteins ADF family.

Actin-depolymerizing protein. Severs actin filaments (F-actin) and binds to actin monomers. The chain is Actin-depolymerizing factor 10 (ADF10) from Oryza sativa subsp. japonica (Rice).